The sequence spans 248 residues: MARKLAAGNWKMNGVEADLAEVDALGEAVAAANCDVLLCPPATLIAPMAKRAGLMDLYVGGQTCHTAASGAHTGDVSAAMLADAGASHVILGHSERRADHGERSEDVAAQVTAAIDANLIAIICVGETEAERDANVTLNVVSSQLAGSIPTGATPAQIVVAYEPVWAIGTGRTPTLEQIAEVHDHIRSELAARRGSAANDIPLLYGGSVKPGNAAEIFAVSNVDGALVGGASLKASDFGGIIAALSAA.

Position 9–11 (9–11 (NWK)) interacts with substrate. Residue H93 is the Electrophile of the active site. The active-site Proton acceptor is the E163. Substrate is bound by residues G169, S208, and 229–230 (GG).

The protein belongs to the triosephosphate isomerase family. As to quaternary structure, homodimer.

Its subcellular location is the cytoplasm. The catalysed reaction is D-glyceraldehyde 3-phosphate = dihydroxyacetone phosphate. The protein operates within carbohydrate biosynthesis; gluconeogenesis. It participates in carbohydrate degradation; glycolysis; D-glyceraldehyde 3-phosphate from glycerone phosphate: step 1/1. Functionally, involved in the gluconeogenesis. Catalyzes stereospecifically the conversion of dihydroxyacetone phosphate (DHAP) to D-glyceraldehyde-3-phosphate (G3P). This is Triosephosphate isomerase from Jannaschia sp. (strain CCS1).